The chain runs to 311 residues: Homeobox-leucine zipper protein HOX1 (311 aa).

2 disordered regions span residues 29-69 (AGGA…SDHR) and 97-160 (AETT…KKLR). A compositionally biased stretch (low complexity) spans 119–145 (SSPNSTLSSLSGKRGAPSAATAAAAAA). A DNA-binding region (homeobox) is located at residues 154–213 (GSRKKLRLSKDQAAVLEDTFKEHNTLNPKQKAALARQLNLKPRQVEVWFQNRRARTKLKQ). Residues 212 to 256 (KQTEVDCELLKRCCETLTDENRRLHRELQELRALKLATAAAAPHH) are leucine-zipper. The tract at residues 279 to 311 (SAATTTRNNSGAAPARPVPTRPWPPAAAQRSSA) is disordered. The segment covering 280-289 (AATTTRNNSG) has biased composition (polar residues). Pro residues predominate over residues 294–303 (RPVPTRPWPP).

This sequence belongs to the HD-ZIP homeobox family. Class II subfamily. Homodimer. May form a heterodimer with HOX2, HOX3 or HOX7. In terms of tissue distribution, expressed in root provascular and vascular cylinder, provascular and vascular strands of leaves, provascular and vascular strands of the whole panicle, in mature embryo provascular bundles of scutellum and embryonic axis and provascular and vascular strands of young immature spikelet organs. Expressed in differentiating and differentiated xylem and phloem elements, and in outer and inner bundle sheath cells of all vascular bundles. Expressed in auricles, ligules, culm, guard cells brac hairs and pollen.

Its subcellular location is the nucleus. Its function is as follows. Probable transcription repressor involved leaf development. Binds to the DNA sequence 5'-CAAT[GC]ATTG-3'. May act as a regulatory switch to specify provascular cell fate. The chain is Homeobox-leucine zipper protein HOX1 (HOX1) from Oryza sativa subsp. indica (Rice).